The primary structure comprises 142 residues: Large ribosomal subunit protein uL11 (142 aa).

Belongs to the universal ribosomal protein uL11 family. Part of the ribosomal stalk of the 50S ribosomal subunit. Interacts with L10 and the large rRNA to form the base of the stalk. L10 forms an elongated spine to which L12 dimers bind in a sequential fashion forming a multimeric L10(L12)X complex. Post-translationally, one or more lysine residues are methylated.

In terms of biological role, forms part of the ribosomal stalk which helps the ribosome interact with GTP-bound translation factors. In Mycoplasma mycoides subsp. mycoides SC (strain CCUG 32753 / NCTC 10114 / PG1), this protein is Large ribosomal subunit protein uL11.